We begin with the raw amino-acid sequence, 477 residues long: E3 ubiquitin-protein ligase TRIM17 (477 aa).

Residues 16-66 form an RING-type zinc finger; the sequence is CSICLDYFTDPVMTACGHNFCRECIQMSWEKGKVKKGKKKQKGSFPCPECR. The B box-type zinc finger occupies 94–135; the sequence is QKRDLCQAHQEPLKLFCQDDQSPICVVCREAQEHRMHRVLPL. The Zn(2+) site is built by C99, H102, C121, and H127. Residues 135–226 adopt a coiled-coil conformation; the sequence is LDEAAREYKL…KLQDSKASLD (92 aa). Positions 276-475 constitute a B30.2/SPRY domain; sequence AIKTLCRVPG…MVISTVTMWV (200 aa).

The protein belongs to the TRIM/RBCC family. As to quaternary structure, interacts (via coiled coil) with TRIM44 (via coiled coil). Interacts with TRIM28; this interaction prevents TRIM28 activity on BCL2A1. Interacts with TRIM41; this interaction prevents TRIM41 activity on ZSCAN2. Interacts with BECN1. Interacts with NFATC3 and NFATC4; these interactions prevent NFATC3 and NFATC4 nuclear localization. Auto-ubiquitinated. Almost exclusively in the testis.

It localises to the cytoplasm. It is found in the lysosome. The enzyme catalyses S-ubiquitinyl-[E2 ubiquitin-conjugating enzyme]-L-cysteine + [acceptor protein]-L-lysine = [E2 ubiquitin-conjugating enzyme]-L-cysteine + N(6)-ubiquitinyl-[acceptor protein]-L-lysine.. It functions in the pathway protein modification; protein ubiquitination. E3 ubiquitin ligase that plays important roles in the regulation of neuronal apoptosis, selective autophagy or cell proliferation. Stimulates the degradation of kinetochore ZW10 interacting protein ZWINT in a proteasome-dependent manner, leading to negative regulation of cell proliferation. Inhibits autophagic degradation of diverse known targets while contributing to autophagy of midbodies. Autophagy-inhibitory activity involves MCL1, which TRIM17 assembles into complexes with the key autophagy regulator BECN1. Controls neuronal apoptosis by mediating ubiquitination and degradation of MCL1 to initiate neuronal death. In addition, regulates NFAT transcription factors NFATC3 and NFATC4 activities by preventing their nuclear localization, thus inhibiting their transcriptional activities. Decreases TRIM41-mediated degradation of ZSCAN2 thereby stimulating alpha-synuclein/SNCA transcription in neuronal cells. Prevents the E3 ubiquitin-ligase activity of TRIM28 and its interaction with anti-apoptotic BCL2A1, blocking TRIM28 from ubiquitinating BCL2A1. This Mus musculus (Mouse) protein is E3 ubiquitin-protein ligase TRIM17 (Trim17).